Reading from the N-terminus, the 186-residue chain is Shikimate kinase (186 aa).

15–20 (GAGKTT) is an ATP binding site. T19 provides a ligand contact to Mg(2+). The substrate site is built by D37, R61, and G83. R121 contacts ATP. Residue R140 participates in substrate binding.

This sequence belongs to the shikimate kinase family. As to quaternary structure, monomer. It depends on Mg(2+) as a cofactor.

It localises to the cytoplasm. It catalyses the reaction shikimate + ATP = 3-phosphoshikimate + ADP + H(+). It participates in metabolic intermediate biosynthesis; chorismate biosynthesis; chorismate from D-erythrose 4-phosphate and phosphoenolpyruvate: step 5/7. Functionally, catalyzes the specific phosphorylation of the 3-hydroxyl group of shikimic acid using ATP as a cosubstrate. This is Shikimate kinase from Psychrobacter cryohalolentis (strain ATCC BAA-1226 / DSM 17306 / VKM B-2378 / K5).